Reading from the N-terminus, the 206-residue chain is dITP/XTP pyrophosphatase (206 aa).

10 to 15 serves as a coordination point for substrate; the sequence is SRNAKK. Catalysis depends on Asp75, which acts as the Proton acceptor. Residue Asp75 coordinates Mg(2+). Residues Ser76, 158–161, Lys181, and 186–187 each bind substrate; these read FGYD and HR.

It belongs to the HAM1 NTPase family. As to quaternary structure, homodimer. It depends on Mg(2+) as a cofactor.

The enzyme catalyses XTP + H2O = XMP + diphosphate + H(+). It carries out the reaction dITP + H2O = dIMP + diphosphate + H(+). It catalyses the reaction ITP + H2O = IMP + diphosphate + H(+). Functionally, pyrophosphatase that catalyzes the hydrolysis of nucleoside triphosphates to their monophosphate derivatives, with a high preference for the non-canonical purine nucleotides XTP (xanthosine triphosphate), dITP (deoxyinosine triphosphate) and ITP. Seems to function as a house-cleaning enzyme that removes non-canonical purine nucleotides from the nucleotide pool, thus preventing their incorporation into DNA/RNA and avoiding chromosomal lesions. This chain is dITP/XTP pyrophosphatase, found in Nocardia farcinica (strain IFM 10152).